A 236-amino-acid chain; its full sequence is UPF0502 protein Bcenmc03_4618 (236 aa).

Belongs to the UPF0502 family.

In Burkholderia orbicola (strain MC0-3), this protein is UPF0502 protein Bcenmc03_4618.